A 252-amino-acid polypeptide reads, in one-letter code: Probable transcriptional regulatory protein Cagg_2594 (252 aa).

Residues 1–14 (MSGHSKWHTIRRAK) show a composition bias toward basic residues. The tract at residues 1–22 (MSGHSKWHTIRRAKSANDQRRG) is disordered.

This sequence belongs to the TACO1 family.

The protein localises to the cytoplasm. This Chloroflexus aggregans (strain MD-66 / DSM 9485) protein is Probable transcriptional regulatory protein Cagg_2594.